Reading from the N-terminus, the 494-residue chain is MKKQAFSSEQYLNLQRDHILERINQFDGKLYLEFGGKMLEDFHAARVLPGYEPDNKIKLLQELKEQVEVVIAINASNIEHSKARGDLGISYDQEVLRLIDKFNELGIFVGSVVITQYAGQPAADAFRNQLEKNGIDSYLHYPIKGYPTDMDHIISPEGMGKNDYIKTSRNLIVVTAPGPGSGKLATCMSNMYHDQINGIKSGYAKFETFPVWNLPLHHPVNLAYEAATADLDDVNMIDPFHLQTYGETTVNYNRDIEIFPVLKRMLERILGKSPYASPTDMGVNMVGFAITDDEAAVEASKQEIIRRYYQTVLDFKAEKVGEAAVKKIELLMNDLGITPADRKVAVVARQKAEETGGPALAFELPNGEIVTGKNSELFGPTAAALINAIKKSADIAKEVKLIEPEVVKPIQGLKIDHLGSRNPRLHSNEILIALAITATENPDAARAMEELGNLKGSEAHSTIILTDEDKNVLRKLGINVTFDPYYQYDRLYRK.

Belongs to the UPF0371 family.

The sequence is that of UPF0371 protein SP70585_0405 from Streptococcus pneumoniae (strain 70585).